A 345-amino-acid polypeptide reads, in one-letter code: S-adenosylmethionine:tRNA ribosyltransferase-isomerase (345 aa).

This sequence belongs to the QueA family. In terms of assembly, monomer.

It is found in the cytoplasm. It catalyses the reaction 7-aminomethyl-7-carbaguanosine(34) in tRNA + S-adenosyl-L-methionine = epoxyqueuosine(34) in tRNA + adenine + L-methionine + 2 H(+). It participates in tRNA modification; tRNA-queuosine biosynthesis. In terms of biological role, transfers and isomerizes the ribose moiety from AdoMet to the 7-aminomethyl group of 7-deazaguanine (preQ1-tRNA) to give epoxyqueuosine (oQ-tRNA). The chain is S-adenosylmethionine:tRNA ribosyltransferase-isomerase from Shewanella woodyi (strain ATCC 51908 / MS32).